Reading from the N-terminus, the 622-residue chain is Glutamyl-tRNA(Gln) amidotransferase subunit E (622 aa).

This sequence belongs to the GatB/GatE family. GatE subfamily. In terms of assembly, heterodimer of GatD and GatE.

The catalysed reaction is L-glutamyl-tRNA(Gln) + L-glutamine + ATP + H2O = L-glutaminyl-tRNA(Gln) + L-glutamate + ADP + phosphate + H(+). Its function is as follows. Allows the formation of correctly charged Gln-tRNA(Gln) through the transamidation of misacylated Glu-tRNA(Gln) in organisms which lack glutaminyl-tRNA synthetase. The reaction takes place in the presence of glutamine and ATP through an activated gamma-phospho-Glu-tRNA(Gln). The GatDE system is specific for glutamate and does not act on aspartate. In Halobacterium salinarum (strain ATCC 29341 / DSM 671 / R1), this protein is Glutamyl-tRNA(Gln) amidotransferase subunit E.